The following is a 126-amino-acid chain: Acidic phospholipase A2 3 (126 aa).

Positions 1-7 are excised as a propeptide; the sequence is SNRPMPL. 7 cysteine pairs are disulfide-bonded: Cys18/Cys78, Cys33/Cys125, Cys35/Cys51, Cys50/Cys106, Cys57/Cys99, Cys67/Cys92, and Cys85/Cys97. 3 residues coordinate Ca(2+): Tyr34, Gly36, and Gly38. The active site involves His54. Asp55 contacts Ca(2+). The active site involves Asp100.

It belongs to the phospholipase A2 family. Group I subfamily. D49 sub-subfamily. Ca(2+) is required as a cofactor. Expressed by the venom gland.

Its subcellular location is the secreted. The enzyme catalyses a 1,2-diacyl-sn-glycero-3-phosphocholine + H2O = a 1-acyl-sn-glycero-3-phosphocholine + a fatty acid + H(+). Its function is as follows. PLA2 catalyzes the calcium-dependent hydrolysis of the 2-acyl groups in 3-sn-phosphoglycerides. In Naja sagittifera (Andaman cobra), this protein is Acidic phospholipase A2 3.